A 183-amino-acid polypeptide reads, in one-letter code: Translation initiation factor IF-3 (183 aa).

The protein belongs to the IF-3 family. In terms of assembly, monomer.

The protein resides in the cytoplasm. Its function is as follows. IF-3 binds to the 30S ribosomal subunit and shifts the equilibrium between 70S ribosomes and their 50S and 30S subunits in favor of the free subunits, thus enhancing the availability of 30S subunits on which protein synthesis initiation begins. This Aliivibrio salmonicida (strain LFI1238) (Vibrio salmonicida (strain LFI1238)) protein is Translation initiation factor IF-3.